The sequence spans 350 residues: S-adenosylmethionine:tRNA ribosyltransferase-isomerase (350 aa).

This sequence belongs to the QueA family. In terms of assembly, monomer.

Its subcellular location is the cytoplasm. The enzyme catalyses 7-aminomethyl-7-carbaguanosine(34) in tRNA + S-adenosyl-L-methionine = epoxyqueuosine(34) in tRNA + adenine + L-methionine + 2 H(+). The protein operates within tRNA modification; tRNA-queuosine biosynthesis. Transfers and isomerizes the ribose moiety from AdoMet to the 7-aminomethyl group of 7-deazaguanine (preQ1-tRNA) to give epoxyqueuosine (oQ-tRNA). This chain is S-adenosylmethionine:tRNA ribosyltransferase-isomerase, found in Bacillus thuringiensis subsp. konkukian (strain 97-27).